The primary structure comprises 2027 residues: Citron Rho-interacting kinase (2027 aa).

Met-1 is subject to N-acetylmethionine. In terms of domain architecture, Protein kinase spans 97-360; the sequence is FEVRSLVGCG…FEGLCCHPFF (264 aa). Residues 103–111 and Lys-126 contribute to the ATP site; that span reads VGCGHFAEV. Asp-221 acts as the Proton acceptor in catalysis. Positions 361–431 constitute an AGC-kinase C-terminal domain; that stretch reads SKIDWNNIRN…SKALGILGRS (71 aa). Ser-433, Ser-440, Ser-480, and Ser-582 each carry phosphoserine. Residues 453–1297 adopt a coiled-coil conformation; it reads IKSKELQDSQ…SAREEAAHRK (845 aa). The tract at residues 1091 to 1302 is interaction with Rho/Rac; that stretch reads LAVKEHKAEI…AAHRKATDHP (212 aa). Position 1196 is a phosphotyrosine (Tyr-1196). Positions 1290-1303 are enriched in basic and acidic residues; it reads REEAAHRKATDHPH. Disordered regions lie at residues 1290 to 1310 and 1322 to 1351; these read REEA…PATA and SPEH…EFSR. Residues 1327 to 1337 are compositionally biased toward low complexity; the sequence is PSAMSLLAPPS. The segment covering 1339-1351 has biased composition (basic and acidic residues); the sequence is RRKESSTPEEFSR. Residues 1362 to 1411 form a Phorbol-ester/DAG-type zinc finger; that stretch reads PHRFNVGLNMRATKCAVCLDTVHFGRQASKCLECQVMCHPKCSTCLPATC. Positions 1443-1563 constitute a PH domain; that stretch reads SLHLEGWMKV…WVTALESVVA (121 aa). Positions 1591-1881 constitute a CNH domain; sequence RLDMNCTLPF…RYLGPAISSG (291 aa). Lys-1721 bears the N6-acetyllysine mark. The segment at 1905-2012 is disordered; sequence ESGTEHHRGP…RGRLPAGAVR (108 aa). At Ser-1940 the chain carries Phosphoserine. The span at 1948-2003 shows a compositional bias: basic and acidic residues; sequence SHPREPSTPHRYREGRTELRRDKSPGRPLEREKSPGRMLSTRRERSPGRLFEDSSR. An SH3-binding motif is present at residues 1953 to 1958; sequence PSTPHR. Phosphoserine is present on Ser-1993. Thr-2013 carries the phosphothreonine modification.

It belongs to the protein kinase superfamily. AGC Ser/Thr protein kinase family. In terms of assembly, directly interacts with KIF14 depending on the activation state (stronger interaction with the kinase-dead form). Homodimer. Interacts with TTC3.

It localises to the cytoplasm. The enzyme catalyses L-seryl-[protein] + ATP = O-phospho-L-seryl-[protein] + ADP + H(+). It catalyses the reaction L-threonyl-[protein] + ATP = O-phospho-L-threonyl-[protein] + ADP + H(+). Functionally, plays a role in cytokinesis. Required for KIF14 localization to the central spindle and midbody. Putative RHO/RAC effector that binds to the GTP-bound forms of RHO and RAC1. It probably binds p21 with a tighter specificity in vivo. Displays serine/threonine protein kinase activity. Plays an important role in the regulation of cytokinesis and the development of the central nervous system. Phosphorylates MYL9/MLC2. The sequence is that of Citron Rho-interacting kinase (CIT) from Homo sapiens (Human).